The following is a 117-amino-acid chain: NADH-ubiquinone oxidoreductase chain 3 (117 aa).

The next 3 helical transmembrane spans lie at 1-21, 58-78, and 86-106; these read MLML…VMML, FLIA…LPMI, and LMNW…GLYH.

The protein belongs to the complex I subunit 3 family.

Its subcellular location is the mitochondrion membrane. It catalyses the reaction a ubiquinone + NADH + 5 H(+)(in) = a ubiquinol + NAD(+) + 4 H(+)(out). Functionally, core subunit of the mitochondrial membrane respiratory chain NADH dehydrogenase (Complex I) that is believed to belong to the minimal assembly required for catalysis. Complex I functions in the transfer of electrons from NADH to the respiratory chain. The immediate electron acceptor for the enzyme is believed to be ubiquinone. This Anopheles gambiae (African malaria mosquito) protein is NADH-ubiquinone oxidoreductase chain 3 (mt:ND3).